The primary structure comprises 445 residues: Putative serpin-Z5 (445 aa).

Residues 356–380 (GTEAAASAINMVCGMSMTPEPRPVP) are RCL.

The protein belongs to the serpin family.

Probable serine protease inhibitor. In Oryza sativa subsp. japonica (Rice), this protein is Putative serpin-Z5.